A 723-amino-acid polypeptide reads, in one-letter code: E3 ubiquitin-protein ligase LRSAM1 (723 aa).

6 LRR repeats span residues 30 to 51 (ADDI…AFAT), 56 to 77 (QKKV…SCSL), 82 to 103 (TIKV…LGQL), 105 to 127 (ALQV…GNLT), 128 to 149 (QLQT…VGEL), and 151 to 172 (SLRT…LAHV). S234 is subject to Phosphoserine. Coiled coils occupy residues 254-380 (SDYE…TESL) and 510-562 (ALSS…KPLS). A disordered region spans residues 282 to 314 (TQLLQQSSSQKDEILQTVKEEQSRLEQGLSEHQ). Over residues 291 to 314 (QKDEILQTVKEEQSRLEQGLSEHQ) the composition is skewed to basic and acidic residues. An SAM domain is found at 569-632 (GMERQLVALL…LRRVQELLDA (64 aa)). Residue S604 is modified to Phosphoserine. Residues 642–665 (PMGEVVTPTAPQEPPESVRPSAPP) form a disordered region. 2 short sequence motifs (PTAP motif) span residues 649-652 (PTAP) and 661-664 (PSAP). An RING-type zinc finger spans residues 675–710 (CVVCLEREAQMIFLNCGHVCCCQQCCQPLRTCPLCR).

In terms of assembly, interacts with TSG101. Interacts with PHF23. Interacts with FUS. In terms of processing, ubiquitination promoted by PHF23 leads to proteasomal degradation. As to expression, highly expressed in adult spinal cord motoneurons as well as in fetal spinal cord and muscle tissue.

It is found in the cytoplasm. The enzyme catalyses S-ubiquitinyl-[E2 ubiquitin-conjugating enzyme]-L-cysteine + [acceptor protein]-L-lysine = [E2 ubiquitin-conjugating enzyme]-L-cysteine + N(6)-ubiquitinyl-[acceptor protein]-L-lysine.. It functions in the pathway protein modification; protein ubiquitination. Its function is as follows. E3 ubiquitin-protein ligase that mediates monoubiquitination of TSG101 at multiple sites, leading to inactivate the ability of TSG101 to sort endocytic (EGF receptors) and exocytic (HIV-1 viral proteins) cargos. Bacterial recognition protein that defends the cytoplasm from invasive pathogens. Localizes to several intracellular bacterial pathogens and generates the bacteria-associated ubiquitin signal leading to autophagy-mediated intracellular bacteria degradation (xenophagy). The protein is E3 ubiquitin-protein ligase LRSAM1 of Homo sapiens (Human).